Here is a 214-residue protein sequence, read N- to C-terminus: Adenylate kinase (214 aa).

10 to 15 contributes to the ATP binding site; the sequence is GAGKGT. Residues 30 to 59 form an NMP region; the sequence is STGDMLRAAVKAGTPLGVKAQEIMIQGGLV. AMP-binding positions include threonine 31, arginine 36, 57 to 59, 85 to 88, and glutamine 92; these read GLV and GFPR. The interval 126–163 is LID; the sequence is GRRSCSSCGKGYHLVFDPPLRAGVCDVCGSGLVQRADD. An ATP-binding site is contributed by arginine 127. Zn(2+)-binding residues include cysteine 130, cysteine 133, cysteine 150, and cysteine 153. Arginine 160 and arginine 171 together coordinate AMP. Glycine 199 contacts ATP.

The protein belongs to the adenylate kinase family. As to quaternary structure, monomer.

The protein resides in the cytoplasm. The enzyme catalyses AMP + ATP = 2 ADP. It functions in the pathway purine metabolism; AMP biosynthesis via salvage pathway; AMP from ADP: step 1/1. Catalyzes the reversible transfer of the terminal phosphate group between ATP and AMP. Plays an important role in cellular energy homeostasis and in adenine nucleotide metabolism. In Trichlorobacter lovleyi (strain ATCC BAA-1151 / DSM 17278 / SZ) (Geobacter lovleyi), this protein is Adenylate kinase.